Reading from the N-terminus, the 842-residue chain is Elongation factor 2 (842 aa).

Residues 17–253 (SNVRNMSVIA…LWGENYFNPK (237 aa)) form the tr-type G domain. Residues 26–33 (AHVDHGKS), 104–108 (DSPGH), and 158–161 (NKVD) each bind GTP. Residue Ser-568 is modified to Phosphoserine. Residue Thr-574 is modified to Phosphothreonine. His-699 carries the diphthamide modification.

The protein belongs to the TRAFAC class translation factor GTPase superfamily. Classic translation factor GTPase family. EF-G/EF-2 subfamily.

The protein localises to the cytoplasm. Catalyzes the GTP-dependent ribosomal translocation step during translation elongation. During this step, the ribosome changes from the pre-translocational (PRE) to the post-translocational (POST) state as the newly formed A-site-bound peptidyl-tRNA and P-site-bound deacylated tRNA move to the P and E sites, respectively. Catalyzes the coordinated movement of the two tRNA molecules, the mRNA and conformational changes in the ribosome. The protein is Elongation factor 2 (eft201) of Schizosaccharomyces pombe (strain 972 / ATCC 24843) (Fission yeast).